Reading from the N-terminus, the 156-residue chain is MPRKGHVTKRAVLADPVYNSKLVTKLINHLMIDGKRAKASSILYDAFNIVQDKTGKEPLDVFEEAMNNVMPVLEVRARRIGGSNYQIPVEVRPERRTTLGLRWLVSYARLRNEHTMDERLANEIIDASNNTGSAVKKREDVHRMAEANRAFAHYRF.

It belongs to the universal ribosomal protein uS7 family. Part of the 30S ribosomal subunit. Contacts proteins S9 and S11.

In terms of biological role, one of the primary rRNA binding proteins, it binds directly to 16S rRNA where it nucleates assembly of the head domain of the 30S subunit. Is located at the subunit interface close to the decoding center, probably blocks exit of the E-site tRNA. This Lactobacillus helveticus (strain DPC 4571) protein is Small ribosomal subunit protein uS7.